Reading from the N-terminus, the 764-residue chain is Nucleolar transcription factor 1 (764 aa).

At Met-1 the chain carries N-acetylmethionine. The tract at residues 1–21 (MNGEADCPTDLEMAAPKGQDR) is disordered. DNA-binding regions (HMG box) lie at residues 112–180 (PKKP…ARFR) and 196–264 (PEKP…RDYI). Thr-201 carries the phosphothreonine modification. Residues Ser-273, Ser-336, Ser-364, Ser-389, Ser-412, Ser-433, Ser-435, Ser-484, Ser-495, Ser-546, Ser-584, and Ser-638 each carry the phosphoserine modification. A DNA-binding region (HMG box 3) is located at residues 298–362 (TKPPPNSYSL…DYEVELLRFL (65 aa)). Positions 381-411 (NINKKQATSPASKKPAQEGGKGGSEKPKRPV) are disordered. 3 DNA-binding regions (HMG box) span residues 407–475 (PKRP…GGER), 482–549 (PESP…SEMR), and 568–634 (KKPP…DLWV). The tract at residues 459–487 (REAALKAQSERKPGGEREERGKLPESPKR) is disordered. The segment at 546–576 (SEMRAPPAATNSSKKMKFQGEPKKPPMNGYQ) is disordered. A disordered region spans residues 648-764 (YISNKRKSMT…SGDSSDSDSN (117 aa)). Residues 664–674 (PKSSRTTLQSK) are compositionally biased toward polar residues. Acidic residues predominate over residues 677–745 (SEEDDEEDED…DDDEDEDNES (69 aa)). The segment covering 746 to 758 (EGSSSSSSSSGDS) has biased composition (low complexity).

Homodimer. Part of Pol I pre-initiation complex (PIC), in which Pol I core assembles with RRN3 and promoter-bound UTBF and SL1/TIF-IB complex. Interacts with TOP2A in the context of Pol I complex. Interacts with TBP. Interacts with TAF1A. Interacts with RASL11A. Binds to IRS1 and PIK3CA. Interacts with DHX33. Interacts with PHF6. Interacts with CEBPA (isoform 1 and isoform 4). Interacts with DDX11. Interacts with NOP53. Interacts with ALKBH2. In terms of processing, phosphorylated and activated by PIK3CA.

Its subcellular location is the nucleus. The protein resides in the nucleolus. Functionally, recognizes the ribosomal RNA gene promoter and activates transcription mediated by RNA polymerase I (Pol I) through cooperative interactions with the transcription factor SL1/TIF-IB complex. It binds specifically to the upstream control element and can activate Pol I promoter escape. The protein is Nucleolar transcription factor 1 (UBTF) of Homo sapiens (Human).